A 696-amino-acid polypeptide reads, in one-letter code: C2 domain-containing protein 2 (696 aa).

Residues 8-28 (VQWLFLVSLFVAALGTVGLYL) traverse the membrane as a helical segment. The SMP-LBD domain occupies 45–238 (EPDELRRRES…PTQVKEAQSL (194 aa)). Ser-54 bears the Phosphoserine mark. The C2 domain maps to 241-357 (PSSTAQEPCP…RKQPNGPQTF (117 aa)). Ser-436 is modified (phosphoserine). Thr-440 is modified (phosphothreonine). Residues 551-611 (ATEASATTPP…DGDELSESSL (61 aa)) form a disordered region. A compositionally biased stretch (basic and acidic residues) spans 573 to 588 (KPRENDLDSWELEKES). The residue at position 581 (Ser-581) is a Phosphoserine.

It localises to the membrane. In Mus musculus (Mouse), this protein is C2 domain-containing protein 2.